A 365-amino-acid polypeptide reads, in one-letter code: Transcription factor MYB93 (365 aa).

HTH myb-type domains lie at 9 to 61 (ENGL…TNYL) and 62 to 116 (RPDI…KKKL). 2 DNA-binding regions (H-T-H motif) span residues 37–61 (WRAL…TNYL) and 89–112 (WSAI…NTHL).

As to quaternary structure, interacts with FBX5.

It localises to the nucleus. The protein resides in the cytoplasm. Functionally, transcription factor that acts as a negative regulator of lateral root (LR) development. Required for normal auxin responses during LR development. May be part of a negative feedback loop stimulated specifically in the endodermis upon LR initiation to ensure that LRs are formed only in the correct place. The chain is Transcription factor MYB93 from Arabidopsis thaliana (Mouse-ear cress).